An 803-amino-acid chain; its full sequence is H(+)/Cl(-) exchange transporter 7 (803 aa).

The tract at residues 1–46 (MANVSKKVSWSGRDRDDEEGAPLLRRTGQPDEETPLLNGAGPGARQ) is disordered. Topologically, residues 1-124 (MANVSKKVSW…TAFRTVEIKR (124 aa)) are cytoplasmic. Ser9 carries the phosphoserine modification. Helical transmembrane passes span 125 to 157 (WVIC…YRVI) and 172 to 195 (FSLL…VAFI). The short motif at 201–205 (GSGIP) is the Selectivity filter part_1 element. Residue Ser202 coordinates chloride. Residues 204–211 (IPQIKCFL) constitute an intramembrane region (helical). 2 consecutive transmembrane segments (helical) span residues 221–239 (RLKT…VVGG) and 245–262 (EGPM…ISQG). Positions 243 to 247 (GKEGP) match the Selectivity filter part_2 motif. 2 intramembrane regions (helical) span residues 286 to 298 (FVSA…VSAA) and 302 to 310 (PVGGVLFSL). 5 consecutive transmembrane segments (helical) span residues 320-339 (FLTW…LNFV), 373-403 (IPVF…FRIR), 408-430 (PCLQ…FVLI), 485-505 (PMTL…TYGL), and 510-533 (GVFI…MSYL). The Selectivity filter part_3 motif lies at 510 to 514 (GVFIP). Residue Phe512 participates in chloride binding. Positions 543 to 557 (GKYALMGAAAQLGGI) form an intramembrane region, helical. Residues 558–560 (VRM) constitute an intramembrane region (note=Loop between two helices). The helical intramembrane region spans 561-572 (TLSLTVIMMEAT). An intramembrane region (note=Loop between two helices) is located at residues 573 to 576 (SNVT). The helical transmembrane segment at 577–595 (YGFPIMLVLMTAKIVGDVF) threads the bilayer. Over 596-803 (IEGLYDMHIQ…GLEELSLAQT (208 aa)) the chain is Cytoplasmic. Tyr600 is a chloride binding site. CBS domains are found at residues 629–693 (MSTP…VFVE) and 739–797 (MNPS…GLEE). ATP contacts are provided by residues 656–658 (HNG) and 781–784 (TRKD). Ser799 bears the Phosphoserine mark.

This sequence belongs to the chloride channel (TC 2.A.49) family. ClC-7/CLCN7 subfamily. In terms of assembly, chloride channel 7 are heteromers of alpha (CLCN7) and beta (OSTM1) subunits. In terms of tissue distribution, brain, testis, muscle and kidney.

The protein localises to the lysosome membrane. It carries out the reaction 2 chloride(in) + H(+)(out) = 2 chloride(out) + H(+)(in). Its function is as follows. Slowly voltage-gated channel mediating the exchange of chloride ions against protons. Functions as antiporter and contributes to the acidification of the lysosome lumen and may be involved in maintaining lysosomal pH. The CLC channel family contains both chloride channels and proton-coupled anion transporters that exchange chloride or another anion for protons. The presence of conserved gating glutamate residues is typical for family members that function as antiporters. In Rattus norvegicus (Rat), this protein is H(+)/Cl(-) exchange transporter 7 (Clcn7).